Reading from the N-terminus, the 141-residue chain is Lysozyme P (141 aa).

An N-terminal signal peptide occupies residues 1–18; that stretch reads MKAFLVICALTLTAVATQ. Residues 20–141 enclose the C-type lysozyme domain; it reads RTMDRCSLAR…GSLPSINSCF (122 aa). 4 disulfide bridges follow: Cys-25–Cys-140, Cys-46–Cys-130, Cys-81–Cys-97, and Cys-93–Cys-111. Active-site residues include Glu-51 and Asp-69.

This sequence belongs to the glycosyl hydrolase 22 family. As to expression, salivary gland.

It catalyses the reaction Hydrolysis of (1-&gt;4)-beta-linkages between N-acetylmuramic acid and N-acetyl-D-glucosamine residues in a peptidoglycan and between N-acetyl-D-glucosamine residues in chitodextrins.. In terms of biological role, unlikely to play an active role in the humoral immune defense. May have a function in the digestion of bacteria in the food. The chain is Lysozyme P (LysP) from Drosophila melanogaster (Fruit fly).